Consider the following 3084-residue polypeptide: MASPIPLAVVGIACRFPGDATNPEKLWDLLAEGKSAWSRVPSDRWNEEAFLHPSPDDMNGSHNHLGGHFLRQDVGEFDAGFFNVLPGEAAAMDPQQRLLLETTYEAIESAGIPKESLAGSKTAVYMAMFTRDYDRNVYKDMMSIPKYHVTGTGDAILANRISYLFDLRGPSMTIDTGCSGGMAAVAHACQALRSGVSDVALAGAANLILSPDHMVGMSNLHMLNAEGKSYAFDDRGAGYGRGEGIATLVIKRLDDAIKANDPIRAIIRDAAVNQDGHTAGITLPSGQAQEALERQVWSNIGLDPREVGYVEAHGTGTQAGDSAELEGISRVFCRGRTDSESLTVGSIKSNIGHTECVSGLAALIKSILVLEKGAIPPNVNYQTAKPGLDLDKRKLRVPTTLQKWSQPGVPRVSVNSFGYGGTNAHAVLEKAPETQRDSASDSQEDVPRLFTLSAASQSSLQDMAASIAGWVSQERDSQPLPTSRLQDIAYTLSERRSLMAWRFWSVASNEHELVDSLYEASRSTENISKISSSEPPPKISFIFTGQGAQWPGMGRELLQSNAVFAESISRSNKILAGLGAAWGLVDEILRDKGPSRLREAELAQPATTAIQIALVDLARHWGIVPDSVVGHSSGEIAAAYAAGYLSPQQAITAAYYRGFSSAVARSKGLGKGGMLAVGLGEDEVAPYLARISPENGEAVVACQNSPKSVTISGDDAAIAELSELLTKDDVFNRRLLVDTAYHSHHMEAAADEYRSSLGDMEPRNSTGTINMFSSVTGSLKTDDKFDANYWVSNLVGKVRFRDALQALCQHDQTSSSPQTHRVFIEIGPHAALAGPLRQSVADMPTPLPHSYTSALVRGTSASQSALSMAGSLFSRGYPLNISALNSASSLSSSSSPSVIPNLPTYAWDHTKRHWHESRLSRDYRMRKHAYHDLLGLRMTDTTPLRPAWRHMVGVEGLPWLRDHVVDGLIVFPGAGYMCMALQAAEQLALDLPSHSKVKRMRLQNVAFLKGLVIPDSTRERVEVQLVLTPLTGDNGPDNKLGYSFLVTAYTADDDKWTEHCRGSVLIDLVSSSAASSQSTVGFESQHQITYAEAVSSLNLQPGEDIPPSELYQTLRKGGNAYGPTFSGIQVFRLLPDNASEDTSSANVALSTIAIPDIQSIMPAKHMQPHIIHPSTLDVLLHTTLPLVSRRLGVVGSVMPVRIDDLVIDLGEQQLETKTDAQLRAITTLTGSGFRSAEADMLVFPAPSSEVDQGQLMPVISVMGMELRSLAALDGAAAGDPATENLSVEESRDICYEMKWVVDESFLSAEHLVNAVQQRDSSFDTPLERCLGALDKYLGIKALKEFMADLKVLEIAAAGDSNGECTLAFLDALQTRGALPAEYDLTAQPHGDALWQDKYPGVVTVRPLLDSMNHGLDGHYDIVFAAGSLNGSDGVTVQTSLSNIRSLMKPGAVLVAIHDTNSSLSADVFSQTGFNTQLSIPFDELSLTIARAVGSASTTTPVKLQFIAEPGFSTSTSIRTIIDNLPSTLTAKGVQIITAPEPCILNWTKGNLYDQDSDSEPVTLNIVLDNGASPILPTVTNGTPTFSNIVSLLQKQHSKVLWVSLSDDEQHKLNPQKHLITGVARTAHAENELLELVTVDVQQPISESTTSGLVNFLGDIAASFPGLDGAAGETGTKKEREYIYIGENHILVPRVMSSPSLNRQIKKSKETVTSTENFVMTPLKLDIAGKDGPGTAHAATFVEDESHRQPLGEDCVEIQAKAFGVGSSSWASKGRPSSASSIAEYAGVITAIGSGVLISSGLKIGDRVVAWAETSLSFASRPRIPASQVRVLPDHVSLSTGAGLPVSLMTACHALREISNVQPGQVVFIDGAASDIGQAALLVARYLGAKVIVAVSTSDEASFLQDKFGLPLANILPRASPFLRHQLRKLLASGGAIDAILSCAGSAVPGEIIKTQKPFGTLVQVGGTTGAMTASAVNSTVVSLDLGSFLTQTHPSKATRLFDMAMETVHRGLDLEPIRIAYLPMTNLNEALKSARRHENMTKYVVEVGQEAMVKVARPSYILPKLDEHATYVVAGGLGDLGQRFLRLMAKAGARYLVTLSRSGAREGQQSALERELNSLSPLSSLNLLCLKCDVSKEAKIQNSLAEIKAAGFPSVRGVIQASLVLGDSTLDNMTAQDFDRVLQAKAFGTLHLQRVFVPEGLAFFISLSSAVNMIGSAGQANYNAANSLQDALAQFDKSSDCFYMALNIGLIEDATVNSDVIIQSVQRQGLTTIYHDELDAYFEYSLSAEARQAGCHQAVIGFTPESIAKTSIVNGTAKTLMFTHVRRQISKQGQTEDDDAGGASGAVKTFAEFVAQGTHEQDDIEAFAARAIANKLADLMLIEPEDVELDESLNDFGLDSLIAIELRNWIMRELGSPIQTSEVLGSENIWALARKVTLRSVHVTGGAGGDASSTGNSESMARTPSDSSTVPTSIPATPSRSPSREPPAKETLTKSQQHLPIPDLTETLNMLVESRTAIGSLEEKAEIERVIQDFLTTDGPELVEILRSNNDSSSDARLDFYNNHLHLERREPLQDHALFFIGHLAEGEAGAAPPPKHTQAERAAIITGAAMHFKQRLESGSLEQHKLNDIVLCMDTLQWLFHTIQEPGVATDLAQKYPSNNKVVAMRKGHIFEIDVHPEDDYAALHQIFSDIIASSDSSSDSIPKVSVLTTKPRHEWAVLRSQIQSLSPTNAETIDAIESCAFIVSLDHSSPETTSERSTSILLNDLHLSNRWLDKMLTFTVASNGVSSLLGENTMLDGLSARQLSEYMTNEIFTNPKLSPPTSPPASTIRPLLFTLTPHVVETISQQIQHNLSTYHPISSSRHFYSQLNRAFLGSRGMRSKGTVLVAIAMATRLFFGHYEPLWETVTLAKYKQGRIDWLQTLTPDMVAFVDSLIAIHSHSLTSSSEVDWKGMNKLLKEVSISHVQNLQRVADGRGYVEALYSLMGTAISQGHDLPELFKSEAWKQTDRHLSPKRAKTDCLGSGGYLRMQEGGFLMPNPGSLFIHYEVHHRDPLVNVSGREEDVARFEGILGACLGVVRRVVEG.

A Ketosynthase family 3 (KS3) domain is found at 4–430 (PIPLAVVGIA…GTNAHAVLEK (427 aa)). Catalysis depends on for beta-ketoacyl synthase activity residues C178, H313, and H353. The tract at residues 541–841 (FIFTGQGAQW…LAGPLRQSVA (301 aa)) is malonyl-CoA:ACP transacylase (MAT) domain. Residue S632 is the For malonyltransferase activity of the active site. The segment at 931–1071 (HDLLGLRMTD…GSVLIDLVSS (141 aa)) is N-terminal hotdog fold. The dehydratase (DH) domain stretch occupies residues 931–1243 (HDLLGLRMTD…RSAEADMLVF (313 aa)). In terms of domain architecture, PKS/mFAS DH spans 931–1275 (HDLLGLRMTD…LRSLAALDGA (345 aa)). Residue H963 is the Proton acceptor; for dehydratase activity of the active site. The C-terminal hotdog fold stretch occupies residues 1099–1275 (LQPGEDIPPS…LRSLAALDGA (177 aa)). The Proton donor; for dehydratase activity role is filled by D1177. The enoylreductase (ER) domain stretch occupies residues 1733–2045 (GTAHAATFVE…RHENMTKYVV (313 aa)). The segment at 2069-2252 (ATYVVAGGLG…YMALNIGLIE (184 aa)) is catalytic ketoreductase (KRc) domain. The Carrier domain occupies 2363 to 2440 (DIEAFAARAI…ALARKVTLRS (78 aa)). At S2400 the chain carries O-(pantetheine 4'-phosphoryl)serine. Residues 2445-2501 (GGAGGDASSTGNSESMARTPSDSSTVPTSIPATPSRSPSREPPAKETLTKSQQHLPI) are disordered. The span at 2456–2481 (NSESMARTPSDSSTVPTSIPATPSRS) shows a compositional bias: polar residues. A compositionally biased stretch (basic and acidic residues) spans 2482-2492 (PSREPPAKETL). The choline/carnitine acyltransferase domain stretch occupies residues 2864–3084 (HFYSQLNRAF…LGVVRRVVEG (221 aa)).

The protein operates within antibiotic biosynthesis. Highly reducing polyketide synthase; part of the gene cluster that mediates the biosynthesis of sordarin and hypoxysordarin, glycoside antibiotics with a unique tetracyclic diterpene aglycone structure. First, the geranylgeranyl diphosphate synthase sdnC constructs GGDP from farnesyl diphosphate and isopentenyl diphosphate. The diterpene cyclase sdnA then catalyzes the cyclization of GGDP to afford cycloaraneosene. Cycloaraneosene is then hydroxylated four times by the putative cytochrome P450 monooxygenases sdnB, sdnE, sdnF and sdnH to give a hydroxylated cycloaraneosene derivative such as cycloaraneosene-8,9,13,19-tetraol. Although the order of the hydroxylations is unclear, at least C8, C9 and C13 of the cycloaraneosene skeleton are hydroxylated before the sordaricin formation. Dehydration of the 13-hydroxy group of the hydroxylated cycloaraneosene derivative might be catalyzed by an unassigned hypothetical protein such as sdnG and sdnP to construct the cyclopentadiene moiety. The FAD-dependent oxidoreductase sdnN is proposed to catalyze the oxidation at C9 of the hydroxylated cycloaraneosene derivative and also catalyze the Baeyer-Villiger oxidation to give the lactone intermediate. The presumed lactone intermediate would be hydrolyzed to give an acrolein moiety and a carboxylate moiety. Then, [4+2]cycloaddition would occur between the acrolein moiety and the cyclopentadiene moiety to give sordaricin. SdnN might also be involved in the [4+2]cycloaddition after the hypothesized oxidation to accommodate the oxidized product and prompt the [4+2]cycloaddition. GDP-6-deoxy-D-altrose may be biosynthesized from GDP-D-mannose by the putative GDP-mannose-4,6-dehydratase sdnI and the short-chain dehydrogenase sdnK. The glycosyltransferase sdnJ catalyzes the attachment of 6-deoxy-D-altrose onto the 19-hydroxy group of sordaricin to give 4'-O-demethylsordarin. The methyltransferase sdnD would complete the biosynthesis of sordarin. Sordarin can be further modified into hypoxysordarin. The unique acyl chain at the 3'-hydroxy group of hypoxysordarin would be constructed by an iterative type I PKS sdnO and the trans-acting polyketide methyltransferase sdnL. SdnL would be responsible for the introduction of an alpha-methyl group of the polyketide chain. Alternatively, the putative beta-lactamase-like sdnR might be responsible for the cleavage and transfer of the polyketide chain from the PKS sdnO to sordarin. Two putative cytochrome P450 monooxygenases, sdnQ and sdnT, might catalyze the epoxidations of the polyketide chain to complete the biosynthesis of hypoxysordarin. Transcriptional regulators sdnM and sdnS are presumably encoded for the transcriptional regulation of the expression of the sdn gene cluster. This Sordaria araneosa (Pleurage araneosa) protein is Highly reducing polyketide synthase sdnO.